The sequence spans 127 residues: UPF0325 protein VC_2264 (127 aa).

The protein belongs to the UPF0325 family.

This Vibrio cholerae serotype O1 (strain ATCC 39315 / El Tor Inaba N16961) protein is UPF0325 protein VC_2264.